The primary structure comprises 183 residues: Beta-defensin 129 (183 aa).

The signal sequence occupies residues 1-19 (MKLLFPVFASLMLQYQVNT). 3 disulfide bridges follow: Cys-27-Cys-53, Cys-34-Cys-48, and Cys-38-Cys-54. Residues 141-183 (TATSTKSNTKESRDSATASPPPAPPPPNILPTPSLELEKAEEQ) form a disordered region. Residues 159 to 170 (SPPPAPPPPNIL) are compositionally biased toward pro residues.

It belongs to the beta-defensin family.

It localises to the secreted. In terms of biological role, has antibacterial activity. This is Beta-defensin 129 (DEFB129) from Pongo pygmaeus (Bornean orangutan).